The chain runs to 156 residues: Endoribonuclease YbeY (156 aa).

Zn(2+)-binding residues include histidine 122, histidine 126, and histidine 132.

It belongs to the endoribonuclease YbeY family. Zn(2+) serves as cofactor.

The protein resides in the cytoplasm. Functionally, single strand-specific metallo-endoribonuclease involved in late-stage 70S ribosome quality control and in maturation of the 3' terminus of the 16S rRNA. The protein is Endoribonuclease YbeY of Moorella thermoacetica (strain ATCC 39073 / JCM 9320).